Here is a 203-residue protein sequence, read N- to C-terminus: Histidine biosynthesis bifunctional protein HisIE (203 aa).

The tract at residues 1–114 (MLTEQQRREL…FGDTAHQWLF (114 aa)) is phosphoribosyl-AMP cyclohydrolase. The phosphoribosyl-ATP pyrophosphohydrolase stretch occupies residues 115–203 (LYQLEQLLAE…VIENLRKRHQ (89 aa)).

This sequence in the N-terminal section; belongs to the PRA-CH family. The protein in the C-terminal section; belongs to the PRA-PH family.

The protein resides in the cytoplasm. The enzyme catalyses 1-(5-phospho-beta-D-ribosyl)-ATP + H2O = 1-(5-phospho-beta-D-ribosyl)-5'-AMP + diphosphate + H(+). The catalysed reaction is 1-(5-phospho-beta-D-ribosyl)-5'-AMP + H2O = 1-(5-phospho-beta-D-ribosyl)-5-[(5-phospho-beta-D-ribosylamino)methylideneamino]imidazole-4-carboxamide. It functions in the pathway amino-acid biosynthesis; L-histidine biosynthesis; L-histidine from 5-phospho-alpha-D-ribose 1-diphosphate: step 2/9. The protein operates within amino-acid biosynthesis; L-histidine biosynthesis; L-histidine from 5-phospho-alpha-D-ribose 1-diphosphate: step 3/9. This is Histidine biosynthesis bifunctional protein HisIE from Escherichia coli O6:H1 (strain CFT073 / ATCC 700928 / UPEC).